Here is a 333-residue protein sequence, read N- to C-terminus: tRNA uridine(34) hydroxylase (333 aa).

Residues 123 to 217 (SDPEVILVDT…YLEEIKQEES (95 aa)) enclose the Rhodanese domain. Cys177 (cysteine persulfide intermediate) is an active-site residue.

It belongs to the TrhO family.

The enzyme catalyses uridine(34) in tRNA + AH2 + O2 = 5-hydroxyuridine(34) in tRNA + A + H2O. In terms of biological role, catalyzes oxygen-dependent 5-hydroxyuridine (ho5U) modification at position 34 in tRNAs. This Shewanella sp. (strain MR-7) protein is tRNA uridine(34) hydroxylase.